The chain runs to 286 residues: Thiazole synthase (286 aa).

Lys-122 acts as the Schiff-base intermediate with DXP in catalysis. 1-deoxy-D-xylulose 5-phosphate is bound by residues Gly-183, 209–210, and 231–232; these read AG and NT.

The protein belongs to the ThiG family. In terms of assembly, homotetramer. Forms heterodimers with either ThiH or ThiS.

Its subcellular location is the cytoplasm. It catalyses the reaction [ThiS sulfur-carrier protein]-C-terminal-Gly-aminoethanethioate + 2-iminoacetate + 1-deoxy-D-xylulose 5-phosphate = [ThiS sulfur-carrier protein]-C-terminal Gly-Gly + 2-[(2R,5Z)-2-carboxy-4-methylthiazol-5(2H)-ylidene]ethyl phosphate + 2 H2O + H(+). It functions in the pathway cofactor biosynthesis; thiamine diphosphate biosynthesis. Its function is as follows. Catalyzes the rearrangement of 1-deoxy-D-xylulose 5-phosphate (DXP) to produce the thiazole phosphate moiety of thiamine. Sulfur is provided by the thiocarboxylate moiety of the carrier protein ThiS. In vitro, sulfur can be provided by H(2)S. The chain is Thiazole synthase from Synechococcus elongatus (strain ATCC 33912 / PCC 7942 / FACHB-805) (Anacystis nidulans R2).